The primary structure comprises 4083 residues: Dynein axonemal heavy chain 3 (4083 aa).

2 disordered regions span residues 1-37 and 111-132; these read MSDTNCSAQKLDKSDSVHHMSHSQARPELPPLPVSAN and DKTSQGLPLGTSSKTSTEPSKK. A stem region spans residues 1-1357; that stretch reads MSDTNCSAQK…HVQMITTEAL (1357 aa). 2 coiled-coil regions span residues 1026 to 1052 and 1108 to 1133; these read IKPIEAECRKWEEKLVRVQENLDAWLK and RMTEKLQEANVLLEDIQRGLNDYLEK. AAA regions lie at residues 1358-1579, 1639-1870, 2003-2251, and 2362-2613; these read YGYE…VLTA, EALN…LHCK, TIPA…VIQG, and EFNS…LLRH. ATP is bound by residues 1396-1403, 1677-1684, 2041-2048, and 2401-2408; these read GPAGTGKT, GDPMGGKT, GPTGTGKS, and GIGGSGRQ. The interval 2628–2927 is stalk; it reads FKTLLNSKRQ…NSLEKNIEIC (300 aa). The stretch at 2651-2714 forms a coiled coil; the sequence is QKLEFASSQV…DEKEANAAAA (64 aa). AAA stretches follow at residues 3012–3242 and 3455–3679; these read LGDP…EISE and IQNF…QIQM.

This sequence belongs to the dynein heavy chain family. As to quaternary structure, consists of at least two heavy chains and a number of intermediate and light chains.

The protein resides in the cytoplasm. Its subcellular location is the cytoskeleton. It localises to the cilium axoneme. Its function is as follows. Force generating protein of respiratory cilia. Produces force towards the minus ends of microtubules. Dynein has ATPase activity; the force-producing power stroke is thought to occur on release of ADP. Involved in sperm motility; implicated in sperm flagellar assembly. The protein is Dynein axonemal heavy chain 3 (Dnah3) of Mus musculus (Mouse).